Here is a 225-residue protein sequence, read N- to C-terminus: Cytidylate kinase (225 aa).

11–19 provides a ligand contact to ATP; that stretch reads GPAGAGKST.

Belongs to the cytidylate kinase family. Type 1 subfamily.

The protein resides in the cytoplasm. It carries out the reaction CMP + ATP = CDP + ADP. The catalysed reaction is dCMP + ATP = dCDP + ADP. This Shouchella clausii (strain KSM-K16) (Alkalihalobacillus clausii) protein is Cytidylate kinase.